The primary structure comprises 163 residues: Inorganic pyrophosphatase (163 aa).

Glu-8 is a Mg(2+) binding site. Lys-16, Arg-30, and Tyr-42 together coordinate substrate. Asp-52, Asp-57, Asp-84, and Asp-89 together coordinate Mg(2+). The active-site Proton acceptor is Asp-89. A substrate-binding site is contributed by Tyr-126.

The protein belongs to the PPase family. In terms of assembly, homohexamer. Mg(2+) serves as cofactor.

It localises to the cytoplasm. The catalysed reaction is diphosphate + H2O = 2 phosphate + H(+). Catalyzes the hydrolysis of inorganic pyrophosphate (PPi) forming two phosphate ions. The chain is Inorganic pyrophosphatase from Streptomyces coelicolor (strain ATCC BAA-471 / A3(2) / M145).